We begin with the raw amino-acid sequence, 251 residues long: Ubiquinone/menaquinone biosynthesis C-methyltransferase UbiE (251 aa).

S-adenosyl-L-methionine contacts are provided by residues T74, D95, 123–124 (NA), and S140.

This sequence belongs to the class I-like SAM-binding methyltransferase superfamily. MenG/UbiE family.

The enzyme catalyses a 2-demethylmenaquinol + S-adenosyl-L-methionine = a menaquinol + S-adenosyl-L-homocysteine + H(+). It catalyses the reaction a 2-methoxy-6-(all-trans-polyprenyl)benzene-1,4-diol + S-adenosyl-L-methionine = a 5-methoxy-2-methyl-3-(all-trans-polyprenyl)benzene-1,4-diol + S-adenosyl-L-homocysteine + H(+). Its pathway is quinol/quinone metabolism; menaquinone biosynthesis; menaquinol from 1,4-dihydroxy-2-naphthoate: step 2/2. It functions in the pathway cofactor biosynthesis; ubiquinone biosynthesis. Functionally, methyltransferase required for the conversion of demethylmenaquinol (DMKH2) to menaquinol (MKH2) and the conversion of 2-polyprenyl-6-methoxy-1,4-benzoquinol (DDMQH2) to 2-polyprenyl-3-methyl-6-methoxy-1,4-benzoquinol (DMQH2). This is Ubiquinone/menaquinone biosynthesis C-methyltransferase UbiE from Yersinia enterocolitica serotype O:8 / biotype 1B (strain NCTC 13174 / 8081).